A 126-amino-acid polypeptide reads, in one-letter code: Small ribosomal subunit protein uS8 (126 aa).

It belongs to the universal ribosomal protein uS8 family. In terms of assembly, part of the 30S ribosomal subunit. Contacts proteins S5 and S12.

One of the primary rRNA binding proteins, it binds directly to 16S rRNA central domain where it helps coordinate assembly of the platform of the 30S subunit. This chain is Small ribosomal subunit protein uS8, found in Oleidesulfovibrio alaskensis (strain ATCC BAA-1058 / DSM 17464 / G20) (Desulfovibrio alaskensis).